The primary structure comprises 331 residues: MIDTNLLRVTVCDEGELEKSTTHFIGSRKIEPEQWITWASECKYLPESDAVALCATLIDRLSLEANVVPVSSPVTICGDIHGQFYDLLELFKTGGTVPNTKYVFMGDYVDRGHYSLETVTLLFCLLLKYPNQITLLRGNHESRRISNVYGFYDECQNKYGHGNVHKWFCKVFDVLPIGALIDESVLCVHGGLSPDIRTIDSLMLLDRAQEVPNKGPLCDIMWSDPDDDVEDWVISQRGAGFVFGAKVTEEFLMNNDLSLLCRSHQLVDEGFKYMFNEKLATVWSAPNYCYRCGNAAAVFEIDGNNRSTKYFNAVPDGSREKPDRVVAPYFL.

Aspartate 79, histidine 81, aspartate 107, and asparagine 139 together coordinate Mn(2+). Histidine 140 (proton donor) is an active-site residue. Residues histidine 189 and histidine 264 each coordinate Mn(2+).

This sequence belongs to the PPP phosphatase family. PP-6 (PP-V) subfamily. As to quaternary structure, forms a complex composed of catalytic subunit pph-6 and regulatory subunit saps-1; the interaction increases pph-6 and saps-1 protein stability. Requires Mn(2+) as cofactor.

It localises to the cytoplasm. The protein resides in the cell cortex. It is found in the cytoskeleton. Its subcellular location is the spindle pole. The enzyme catalyses O-phospho-L-seryl-[protein] + H2O = L-seryl-[protein] + phosphate. The catalysed reaction is O-phospho-L-threonyl-[protein] + H2O = L-threonyl-[protein] + phosphate. Its function is as follows. Catalytic subunit of protein phosphatase 6 (PP6). In complex with saps-1, promotes actomyosin contractility during cytokinesis by regulating the organization of cortical non-muscle myosin II nmy-2 and thus contributing to correct spindle positioning. Also required for the proper generation of pulling forces on spindle poles during anaphase by regulating the cortical localization of gpr-1, gpr-2 and lin-5. This chain is Serine/threonine-protein phosphatase 6 catalytic subunit, found in Caenorhabditis elegans.